The sequence spans 204 residues: Holliday junction branch migration complex subunit RuvA (204 aa).

Positions 1–64 (MIGKLKGTIE…EDQIRLFGFM (64 aa)) are domain I. The segment at 65 to 143 (AVLEREWFNL…AFAGEATNIG (79 aa)) is domain II. Residues 144 to 151 (FKQELGEG) are flexible linker. The domain III stretch occupies residues 152 to 204 (VAPAPVSDAVSALTNLGYSRDQAANAIAAAMKVAGDEADSAKLIRLGLKELSR).

The protein belongs to the RuvA family. As to quaternary structure, homotetramer. Forms an RuvA(8)-RuvB(12)-Holliday junction (HJ) complex. HJ DNA is sandwiched between 2 RuvA tetramers; dsDNA enters through RuvA and exits via RuvB. An RuvB hexamer assembles on each DNA strand where it exits the tetramer. Each RuvB hexamer is contacted by two RuvA subunits (via domain III) on 2 adjacent RuvB subunits; this complex drives branch migration. In the full resolvosome a probable DNA-RuvA(4)-RuvB(12)-RuvC(2) complex forms which resolves the HJ.

It is found in the cytoplasm. Its function is as follows. The RuvA-RuvB-RuvC complex processes Holliday junction (HJ) DNA during genetic recombination and DNA repair, while the RuvA-RuvB complex plays an important role in the rescue of blocked DNA replication forks via replication fork reversal (RFR). RuvA specifically binds to HJ cruciform DNA, conferring on it an open structure. The RuvB hexamer acts as an ATP-dependent pump, pulling dsDNA into and through the RuvAB complex. HJ branch migration allows RuvC to scan DNA until it finds its consensus sequence, where it cleaves and resolves the cruciform DNA. In Rhizobium rhizogenes (strain K84 / ATCC BAA-868) (Agrobacterium radiobacter), this protein is Holliday junction branch migration complex subunit RuvA.